A 251-amino-acid chain; its full sequence is CDP-diacylglycerol pyrophosphatase (251 aa).

Residues 4–24 (AGLLFLVMIVIAVVAAGIGYW) form a helical membrane-spanning segment.

Belongs to the Cdh family.

It is found in the cell inner membrane. The catalysed reaction is a CDP-1,2-diacyl-sn-glycerol + H2O = a 1,2-diacyl-sn-glycero-3-phosphate + CMP + 2 H(+). Its pathway is phospholipid metabolism; CDP-diacylglycerol degradation; phosphatidate from CDP-diacylglycerol: step 1/1. The sequence is that of CDP-diacylglycerol pyrophosphatase from Escherichia coli (strain K12 / MC4100 / BW2952).